The chain runs to 560 residues: Involucrin (560 aa).

A compositionally biased stretch (polar residues) spans 1 to 15; the sequence is MSQQHTLPVTLSPAL. Disordered stretches follow at residues 1–131, 150–359, and 404–534; these read MSQQ…KLLD, EQLL…LVQQ, and GQLK…QSAL. Positions 76–91 are enriched in low complexity; that stretch reads EQQQQEPQEQELQQQH. Basic and acidic residues-rich tracts occupy residues 92-115 and 159-172; these read WEQHEEYQKAENPEQQLKQEKAQR and QEGHLKHLEQREGQ. Positions 189–211 are enriched in low complexity; the sequence is QKGQLELPEQQEGQLELPEQQEG. Basic and acidic residues-rich tracts occupy residues 212-231, 252-264, and 274-320; these read QLKHLEQQEGQLKHLEHQEG, QLKHLDQQEKQPE, and KHLE…EHQE. A compositionally biased stretch (low complexity) spans 321 to 334; that stretch reads GQLGLPEQQVQQLK. Basic and acidic residues-rich tracts occupy residues 335–353, 404–420, 454–463, 476–486, and 494–510; these read QLEKEEGQPKHLEEEEGQL, GQLKHLEEQEGQLKHLE, QLKHLEKQEA, KHLEQQEKQLE, and QLKHLEQQEGQLKDLEQ.

It belongs to the involucrin family. As to quaternary structure, directly or indirectly cross-linked to cornifelin (CNFN). Substrate of transglutaminase. Specific glutamines or lysines are cross-linked to keratins, desmoplakin and to inter involucrin molecules. In terms of tissue distribution, keratinocytes of epidermis and other stratified squamous epithelia.

The protein resides in the cytoplasm. In terms of biological role, part of the insoluble cornified cell envelope (CE) of stratified squamous epithelia. The polypeptide is Involucrin (IVL) (Pan paniscus (Pygmy chimpanzee)).